Here is an 823-residue protein sequence, read N- to C-terminus: Putative ankyrin repeat domain-containing protein 20A4 (823 aa).

ANK repeat units lie at residues 66–95 (QHRT…QIDV), 99–128 (ENRT…NPNL), 132–161 (YGNT…HIEA), 165–194 (DNNT…SSHA), and 198–227 (LRRS…DVFA). Disordered regions lie at residues 301–343 (VPEK…EVED) and 356–405 (QTLR…NICD). Basic and acidic residues predominate over residues 371 to 384 (EQQRHERSEKKQPQ). Coiled-coil stretches lie at residues 431–480 (KKLK…KQLE), 565–724 (EMIT…NNST), and 776–806 (FVLE…KTEV).

The polypeptide is Putative ankyrin repeat domain-containing protein 20A4 (Homo sapiens (Human)).